Here is a 326-residue protein sequence, read N- to C-terminus: MATFADLPDSVLLEIFSYLPVRDRIRISRVCHHWKKLVDDRWLWRHVDLTLYTMRPKVMWHLLRRYMASRLHSLRMGGYLFSGSQAPQLSPALMRALGQKCPNLKRLCLHVANLSMVPITSLPCTLRTLELHSCEISMAWLHKEQDPTVLPLLECIVLDRVPAFRDEHLQGLTRFRALRSLVLGGTYRVTETGLDMGLQELNYLQRLEVLGCTLSADSTLLAISRHLRDVRKIRLTVRGLSAPGLSVLEGMPALESLCLLGPLVTPEMPSPQEILASCLTMPKLRVLELQGLGWEGQEAERILSKGLPHCMVIVRALPKESMDWWM.

In terms of domain architecture, F-box spans 1–47 (MATFADLPDSVLLEIFSYLPVRDRIRISRVCHHWKKLVDDRWLWRHV). 7 LRR repeats span residues 51 to 78 (LYTMRPKVMWHLLRRYMASRLHSLRMGG), 86 to 111 (APQLSPALMRALGQKCPNLKRLCLHV), 161 to 185 (VPAFRDEHLQGLTRFRALRSLVLGG), 186 to 211 (TYRVTETGLDMGLQELNYLQRLEVLG), 212 to 236 (CTLSADSTLLAISRHLRDVRKIRLT), 237 to 261 (VRGLSAPGLSVLEGMPALESLCLLG), and 266 to 291 (PEMPSPQEILASCLTMPKLRVLELQG).

Interacts with SKP1 and CUL1.

It functions in the pathway protein modification; protein ubiquitination. Functionally, substrate-recognition component of the SCF (SKP1-CUL1-F-box protein)-type E3 ubiquitin ligase complex. Mediates the polyubiquitination and proteasomal degradation of CAMK1 leading to disruption of cyclin D1/CDK4 complex assembly which results in G1 cell cycle arrest in lung epithelia. In Bos taurus (Bovine), this protein is F-box/LRR-repeat protein 12 (FBXL12).